The sequence spans 383 residues: Succinyl-diaminopimelate desuccinylase (383 aa).

H74 lines the Zn(2+) pocket. D76 is a catalytic residue. Residue D107 coordinates Zn(2+). The active-site Proton acceptor is E141. The Zn(2+) site is built by E142, E170, and H356.

The protein belongs to the peptidase M20A family. DapE subfamily. Homodimer. It depends on Zn(2+) as a cofactor. Co(2+) is required as a cofactor.

The enzyme catalyses N-succinyl-(2S,6S)-2,6-diaminopimelate + H2O = (2S,6S)-2,6-diaminopimelate + succinate. It participates in amino-acid biosynthesis; L-lysine biosynthesis via DAP pathway; LL-2,6-diaminopimelate from (S)-tetrahydrodipicolinate (succinylase route): step 3/3. Its function is as follows. Catalyzes the hydrolysis of N-succinyl-L,L-diaminopimelic acid (SDAP), forming succinate and LL-2,6-diaminopimelate (DAP), an intermediate involved in the bacterial biosynthesis of lysine and meso-diaminopimelic acid, an essential component of bacterial cell walls. The polypeptide is Succinyl-diaminopimelate desuccinylase (Cupriavidus taiwanensis (strain DSM 17343 / BCRC 17206 / CCUG 44338 / CIP 107171 / LMG 19424 / R1) (Ralstonia taiwanensis (strain LMG 19424))).